A 76-amino-acid chain; its full sequence is uncharacterized protein (76 aa).

Residues Leu6–Phe60 enclose the HTH cro/C1-type domain. The H-T-H motif DNA-binding region spans Gln17–Asn36.

This is an uncharacterized protein from Bacillus subtilis (strain 168).